The chain runs to 79 residues: D-alanyl carrier protein (79 aa).

The 77-residue stretch at 1 to 77 folds into the Carrier domain; that stretch reads MDTKQAVLDI…KIIAKVESLR (77 aa). Ser35 carries the O-(pantetheine 4'-phosphoryl)serine modification.

Belongs to the DltC family. In terms of processing, 4'-phosphopantetheine is transferred from CoA to a specific serine of apo-DCP.

It is found in the cytoplasm. It functions in the pathway cell wall biogenesis; lipoteichoic acid biosynthesis. Carrier protein involved in the D-alanylation of lipoteichoic acid (LTA). The loading of thioester-linked D-alanine onto DltC is catalyzed by D-alanine--D-alanyl carrier protein ligase DltA. The DltC-carried D-alanyl group is further transferred to cell membrane phosphatidylglycerol (PG) by forming an ester bond, probably catalyzed by DltD. D-alanylation of LTA plays an important role in modulating the properties of the cell wall in Gram-positive bacteria, influencing the net charge of the cell wall. This is D-alanyl carrier protein from Lactobacillus johnsonii (strain CNCM I-12250 / La1 / NCC 533).